Here is a 201-residue protein sequence, read N- to C-terminus: Large ribosomal subunit protein uL4 (201 aa).

Positions alanine 45–glycine 71 are disordered.

It belongs to the universal ribosomal protein uL4 family. Part of the 50S ribosomal subunit.

Its function is as follows. One of the primary rRNA binding proteins, this protein initially binds near the 5'-end of the 23S rRNA. It is important during the early stages of 50S assembly. It makes multiple contacts with different domains of the 23S rRNA in the assembled 50S subunit and ribosome. Functionally, forms part of the polypeptide exit tunnel. In Shewanella halifaxensis (strain HAW-EB4), this protein is Large ribosomal subunit protein uL4.